The sequence spans 411 residues: ATP phosphoribosyltransferase 1, chloroplastic (411 aa).

The span at 1–12 (MSLLLPTNLQQY) shows a compositional bias: polar residues. Residues 1–27 (MSLLLPTNLQQYPSSSSFPSSTPILSP) are disordered. A chloroplast-targeting transit peptide spans 1 to 49 (MSLLLPTNLQQYPSSSSFPSSTPILSPPPSTAFSVIVPRRRCLRLVTSC). Over residues 13-24 (PSSSSFPSSTPI) the composition is skewed to low complexity. Position 50 is an N-acetylvaline (Val-50).

It belongs to the ATP phosphoribosyltransferase family. Long subfamily. Requires Mg(2+) as cofactor. Expressed in leaves and at lower levels in roots (at protein level).

Its subcellular location is the plastid. The protein resides in the chloroplast. The enzyme catalyses 1-(5-phospho-beta-D-ribosyl)-ATP + diphosphate = 5-phospho-alpha-D-ribose 1-diphosphate + ATP. It participates in amino-acid biosynthesis; L-histidine biosynthesis; L-histidine from 5-phospho-alpha-D-ribose 1-diphosphate: step 1/9. Feedback inhibited by L-histidine. In terms of biological role, catalyzes the condensation of ATP and 5-phosphoribose 1-diphosphate to form N'-(5'-phosphoribosyl)-ATP (PR-ATP). The protein is ATP phosphoribosyltransferase 1, chloroplastic (HISN1A) of Arabidopsis thaliana (Mouse-ear cress).